The following is a 267-amino-acid chain: Diphthine--ammonia ligase (267 aa).

Residue Tyr97 is modified to Phosphotyrosine.

Belongs to the Diphthine--ammonia ligase family.

It catalyses the reaction diphthine-[translation elongation factor 2] + NH4(+) + ATP = diphthamide-[translation elongation factor 2] + AMP + diphosphate + H(+). Its pathway is protein modification; peptidyl-diphthamide biosynthesis. Functionally, amidase that catalyzes the last step of diphthamide biosynthesis using ammonium and ATP. Diphthamide biosynthesis consists in the conversion of an L-histidine residue in the translation elongation factor 2 (EEF2) to diphthamide. In Mus musculus (Mouse), this protein is Diphthine--ammonia ligase (Dph6).